A 146-amino-acid chain; its full sequence is Ribonuclease H (146 aa).

An RNase H type-1 domain is found at 1–143 (MKKQVTIYTD…CDQLAREAIK (143 aa)). Residues Asp10, Glu48, Asp70, and Asp135 each contribute to the Mg(2+) site.

This sequence belongs to the RNase H family. As to quaternary structure, monomer. The cofactor is Mg(2+).

Its subcellular location is the cytoplasm. It catalyses the reaction Endonucleolytic cleavage to 5'-phosphomonoester.. Endonuclease that specifically degrades the RNA of RNA-DNA hybrids. This chain is Ribonuclease H, found in Chlorobium chlorochromatii (strain CaD3).